Consider the following 201-residue polypeptide: Holliday junction branch migration complex subunit RuvA (201 aa).

The domain I stretch occupies residues 1-64; that stretch reads MYEYIKGKYI…QDFIGLYGFL (64 aa). The segment at 65–143 is domain II; that stretch reads TKDELEMFNK…STDISKGNSE (79 aa). The interval 144-154 is flexible linker; sequence INNLDVDYDEH. Positions 154–201 are domain III; sequence HSKKLEEVRFALNSLGYSEKETDRAINNVDKSEGIENIIKSCLRFLMN.

It belongs to the RuvA family. In terms of assembly, homotetramer. Forms an RuvA(8)-RuvB(12)-Holliday junction (HJ) complex. HJ DNA is sandwiched between 2 RuvA tetramers; dsDNA enters through RuvA and exits via RuvB. An RuvB hexamer assembles on each DNA strand where it exits the tetramer. Each RuvB hexamer is contacted by two RuvA subunits (via domain III) on 2 adjacent RuvB subunits; this complex drives branch migration. In the full resolvosome a probable DNA-RuvA(4)-RuvB(12)-RuvC(2) complex forms which resolves the HJ.

The protein localises to the cytoplasm. The RuvA-RuvB-RuvC complex processes Holliday junction (HJ) DNA during genetic recombination and DNA repair, while the RuvA-RuvB complex plays an important role in the rescue of blocked DNA replication forks via replication fork reversal (RFR). RuvA specifically binds to HJ cruciform DNA, conferring on it an open structure. The RuvB hexamer acts as an ATP-dependent pump, pulling dsDNA into and through the RuvAB complex. HJ branch migration allows RuvC to scan DNA until it finds its consensus sequence, where it cleaves and resolves the cruciform DNA. This Clostridium acetobutylicum (strain ATCC 824 / DSM 792 / JCM 1419 / IAM 19013 / LMG 5710 / NBRC 13948 / NRRL B-527 / VKM B-1787 / 2291 / W) protein is Holliday junction branch migration complex subunit RuvA.